Consider the following 208-residue polypeptide: 3-demethoxyubiquinol 3-hydroxylase (208 aa).

Fe cation-binding residues include E57, E87, H90, E139, E171, and H174.

This sequence belongs to the COQ7 family. Requires Fe cation as cofactor.

It localises to the cell membrane. It carries out the reaction a 5-methoxy-2-methyl-3-(all-trans-polyprenyl)benzene-1,4-diol + AH2 + O2 = a 3-demethylubiquinol + A + H2O. Its pathway is cofactor biosynthesis; ubiquinone biosynthesis. Functionally, catalyzes the hydroxylation of 2-nonaprenyl-3-methyl-6-methoxy-1,4-benzoquinol during ubiquinone biosynthesis. The sequence is that of 3-demethoxyubiquinol 3-hydroxylase from Burkholderia cenocepacia (strain HI2424).